The sequence spans 1373 residues: Capping protein, Arp2/3 and myosin-I linker protein 3 (1373 aa).

The tract at residues arginine 126–serine 151 is disordered. Low complexity predominate over residues threonine 138–serine 151. LRR repeat units follow at residues serine 242–glutamate 269, serine 272–cysteine 299, alanine 333–serine 358, cysteine 390–glutamine 417, alanine 422–glycine 446, leucine 453–glutamate 475, valine 480–asparagine 507, leucine 510–leucine 536, aspartate 541–alanine 564, and asparagine 568–lysine 591. 2 disordered regions span residues arginine 864–aspartate 902 and leucine 970–aspartate 1373. A compositionally biased stretch (pro residues) spans proline 981 to glycine 997. Positions arginine 1007–aspartate 1022 are enriched in basic and acidic residues. The span at glutamine 1047–serine 1062 shows a compositional bias: basic residues. Over residues leucine 1078–proline 1097 the composition is skewed to pro residues. Low complexity predominate over residues serine 1098–serine 1108. Residues arginine 1218–glutamate 1228 are compositionally biased toward basic and acidic residues. A compositionally biased stretch (polar residues) spans proline 1232 to serine 1243. Over residues proline 1269 to valine 1278 the composition is skewed to pro residues. Basic and acidic residues predominate over residues glutamine 1345–proline 1358.

It belongs to the CARMIL family. In terms of tissue distribution, widely expressed, with much higher levels in fetal tissues than in adult ones. Highly expressed in newborn brain.

The protein resides in the cytoplasm. Its subcellular location is the cell membrane. The polypeptide is Capping protein, Arp2/3 and myosin-I linker protein 3 (Carmil3) (Rattus norvegicus (Rat)).